The following is a 200-amino-acid chain: NAD(P)H dehydrogenase (quinone) (200 aa).

Positions 4–191 (LLVLYYSMYG…TIARFQGEHV (188 aa)) constitute a Flavodoxin-like domain. Residues 10–15 (SMYGHV) and 79–81 (TRF) each bind FMN. Position 12 (Tyr-12) interacts with NAD(+). Residue Trp-99 participates in substrate binding. FMN-binding positions include 114–120 (STASQHG) and His-135.

The protein belongs to the WrbA family. It depends on FMN as a cofactor.

It catalyses the reaction a quinone + NADH + H(+) = a quinol + NAD(+). It carries out the reaction a quinone + NADPH + H(+) = a quinol + NADP(+). This chain is NAD(P)H dehydrogenase (quinone), found in Nitrosococcus oceani (strain ATCC 19707 / BCRC 17464 / JCM 30415 / NCIMB 11848 / C-107).